We begin with the raw amino-acid sequence, 333 residues long: Fructose-1,6-bisphosphatase class 1 (333 aa).

Mg(2+) is bound by residues Glu-92, Asp-113, Leu-115, and Asp-116. Residues 116–119, Asn-209, Tyr-242, and Lys-272 each bind substrate; that span reads DGSS. Glu-278 contributes to the Mg(2+) binding site.

This sequence belongs to the FBPase class 1 family. In terms of assembly, homotetramer. The cofactor is Mg(2+).

The protein localises to the cytoplasm. It catalyses the reaction beta-D-fructose 1,6-bisphosphate + H2O = beta-D-fructose 6-phosphate + phosphate. It participates in carbohydrate biosynthesis; Calvin cycle. The protein is Fructose-1,6-bisphosphatase class 1 of Chlorobaculum parvum (strain DSM 263 / NCIMB 8327) (Chlorobium vibrioforme subsp. thiosulfatophilum).